The chain runs to 59 residues: Large ribosomal subunit protein uL30 (59 aa).

The protein belongs to the universal ribosomal protein uL30 family. In terms of assembly, part of the 50S ribosomal subunit.

This is Large ribosomal subunit protein uL30 from Haemophilus ducreyi (strain 35000HP / ATCC 700724).